The primary structure comprises 455 residues: Adenylosuccinate synthetase isozyme 2 (455 aa).

The tract at residues M1–V25 is disordered. Low complexity predominate over residues G12 to V25. Residues G38–K44 and G66–T68 each bind GTP. Residue D39 is the Proton acceptor of the active site. The Mg(2+) site is built by D39 and G66. D39 is a binding site for substrate. IMP contacts are provided by residues D39–K42, N64–H67, T161, R175, N254, T269, and R333. H67 (proton donor) is an active-site residue. V329–R335 is a substrate binding site. GTP is bound by residues R335, K361 to D363, and G443 to K446.

It belongs to the adenylosuccinate synthetase family. In terms of assembly, homodimer. It depends on Mg(2+) as a cofactor.

The protein resides in the cytoplasm. Its subcellular location is the mitochondrion. The catalysed reaction is IMP + L-aspartate + GTP = N(6)-(1,2-dicarboxyethyl)-AMP + GDP + phosphate + 2 H(+). It functions in the pathway purine metabolism; AMP biosynthesis via de novo pathway; AMP from IMP: step 1/2. Its activity is regulated as follows. Inhibited competitively by AMP and IMP and non-competitively by fructose 1,6-bisphosphate. Functionally, plays an important role in the de novo pathway and in the salvage pathway of purine nucleotide biosynthesis. Catalyzes the first committed step in the biosynthesis of AMP from IMP. The sequence is that of Adenylosuccinate synthetase isozyme 2 (adss2) from Danio rerio (Zebrafish).